The sequence spans 261 residues: Segregation and condensation protein A (261 aa).

The protein belongs to the ScpA family. As to quaternary structure, component of a cohesin-like complex composed of ScpA, ScpB and the Smc homodimer, in which ScpA and ScpB bind to the head domain of Smc. The presence of the three proteins is required for the association of the complex with DNA.

Its subcellular location is the cytoplasm. Participates in chromosomal partition during cell division. May act via the formation of a condensin-like complex containing Smc and ScpB that pull DNA away from mid-cell into both cell halves. The protein is Segregation and condensation protein A of Leptospira interrogans serogroup Icterohaemorrhagiae serovar copenhageni (strain Fiocruz L1-130).